The primary structure comprises 869 residues: TATA box-binding protein-associated factor RNA polymerase I subunit C (869 aa).

2 disordered regions span residues 605–629 (SSLRRDAGPPGDTQPDCHAPTASWT) and 729–869 (GAAW…RMGF). Thr-834 carries the post-translational modification Phosphothreonine. Residues 835-860 (PPHSQASSVRATRSQQHTPVLSSSQP) are compositionally biased toward polar residues. Ser-848 carries the phosphoserine modification.

In terms of assembly, component of the transcription factor SL1/TIF-IB complex, composed of TBP and at least TAF1A, TAF1B, TAF1C and TAF1D. In the complex interacts directly with TBP, TAF1A and TAF1B. Interaction of the SL1/TIF-IB subunits with TBP excludes interaction of TBP with the transcription factor IID (TFIID) subunits. Interacts with MYC and RRN3. Interacts with p53/TP53; the interaction prevents the association of SL1/TIF-IB with UBTF and represses RNA polymerase I transcription. Part of Pol I pre-initiation complex (PIC), in which Pol I core assembles with RRN3 and promoter-bound UTBF and SL1/TIF-IB complex.

It is found in the nucleus. Its subcellular location is the nucleolus. Component of the transcription factor SL1/TIF-IB complex, which is involved in the assembly of the PIC (pre-initiation complex) during RNA polymerase I-dependent transcription. The rate of PIC formation probably is primarily dependent on the rate of association of SL1/TIF-IB with the rDNA promoter. SL1/TIF-IB is involved in stabilization of nucleolar transcription factor 1/UBTF on rDNA. Formation of SL1/TIF-IB excludes the association of TBP with TFIID subunits. Recruits RNA polymerase I to the rRNA gene promoter via interaction with RRN3. This chain is TATA box-binding protein-associated factor RNA polymerase I subunit C (TAF1C), found in Homo sapiens (Human).